We begin with the raw amino-acid sequence, 403 residues long: Phosphoglycerate kinase (403 aa).

Residues 24–26 (DLN), arginine 39, 62–65 (HLGR), arginine 121, and arginine 161 contribute to the substrate site. ATP is bound by residues lysine 211, glycine 299, glutamate 330, and 359–362 (GGDS).

This sequence belongs to the phosphoglycerate kinase family. As to quaternary structure, monomer.

The protein resides in the cytoplasm. It carries out the reaction (2R)-3-phosphoglycerate + ATP = (2R)-3-phospho-glyceroyl phosphate + ADP. It functions in the pathway carbohydrate degradation; glycolysis; pyruvate from D-glyceraldehyde 3-phosphate: step 2/5. This is Phosphoglycerate kinase from Rhodococcus jostii (strain RHA1).